Consider the following 423-residue polypeptide: NADP-specific glutamate dehydrogenase (423 aa).

Residue Lys112 is part of the active site.

It belongs to the Glu/Leu/Phe/Val dehydrogenases family. Homohexamer.

The catalysed reaction is L-glutamate + NADP(+) + H2O = 2-oxoglutarate + NH4(+) + NADPH + H(+). This is NADP-specific glutamate dehydrogenase (gdhA) from Saccharolobus shibatae (strain ATCC 51178 / DSM 5389 / JCM 8931 / NBRC 15437 / B12) (Sulfolobus shibatae).